The following is a 300-amino-acid chain: Tyrosine recombinase XerC (300 aa).

In terms of domain architecture, Core-binding (CB) spans 2 to 88 (TQEGKLEQQF…SLRSFYTFLL (87 aa)). Positions 109-294 (RLPKFFYSEE…TKEHLKSTYM (186 aa)) constitute a Tyr recombinase domain. Active-site residues include arginine 150, lysine 174, histidine 246, arginine 249, and histidine 272. The active-site O-(3'-phospho-DNA)-tyrosine intermediate is the tyrosine 281.

This sequence belongs to the 'phage' integrase family. XerC subfamily. In terms of assembly, forms a cyclic heterotetrameric complex composed of two molecules of XerC and two molecules of XerD.

It is found in the cytoplasm. Site-specific tyrosine recombinase, which acts by catalyzing the cutting and rejoining of the recombining DNA molecules. The XerC-XerD complex is essential to convert dimers of the bacterial chromosome into monomers to permit their segregation at cell division. It also contributes to the segregational stability of plasmids. This is Tyrosine recombinase XerC from Listeria monocytogenes serotype 4a (strain HCC23).